Reading from the N-terminus, the 279-residue chain is Proteasome subunit beta (279 aa).

Residues 1–56 (MASQAMSWRGEGERVVRDLAAASTSSFVEHLSQSRPDLLPFGQALPAGVLPQTPHA) constitute a propeptide, removed in mature form; by autocatalysis. Catalysis depends on T57, which acts as the Nucleophile.

This sequence belongs to the peptidase T1B family. As to quaternary structure, the 20S proteasome core is composed of 14 alpha and 14 beta subunits that assemble into four stacked heptameric rings, resulting in a barrel-shaped structure. The two inner rings, each composed of seven catalytic beta subunits, are sandwiched by two outer rings, each composed of seven alpha subunits. The catalytic chamber with the active sites is on the inside of the barrel. Has a gated structure, the ends of the cylinder being occluded by the N-termini of the alpha-subunits. Is capped by the proteasome-associated ATPase, ARC.

The protein localises to the cytoplasm. It catalyses the reaction Cleavage of peptide bonds with very broad specificity.. It functions in the pathway protein degradation; proteasomal Pup-dependent pathway. The formation of the proteasomal ATPase ARC-20S proteasome complex, likely via the docking of the C-termini of ARC into the intersubunit pockets in the alpha-rings, may trigger opening of the gate for substrate entry. Interconversion between the open-gate and close-gate conformations leads to a dynamic regulation of the 20S proteasome proteolysis activity. Functionally, component of the proteasome core, a large protease complex with broad specificity involved in protein degradation. This chain is Proteasome subunit beta, found in Renibacterium salmoninarum (strain ATCC 33209 / DSM 20767 / JCM 11484 / NBRC 15589 / NCIMB 2235).